Here is a 506-residue protein sequence, read N- to C-terminus: Radiation-sensitive protein 28 (506 aa).

5 WD repeats span residues 55–94, 193–233, 285–325, 357–396, and 404–451; these read PLSIGVNCLDIDDTGQVLLGGGDDGSLSIWGLDESLHRND, HHKY…AVQD, RMQS…RLYS, AHLRCCSDIVWNSEGSELCSVGMDGKLNVWRPFTEILQPE, and LGTQ…LWNK.

The protein resides in the nucleus. Functionally, involved in transcription-coupled repair nucleotide excision repair (NER) of UV-induced DNA lesions. This chain is Radiation-sensitive protein 28 (RAD28), found in Saccharomyces cerevisiae (strain ATCC 204508 / S288c) (Baker's yeast).